Reading from the N-terminus, the 923-residue chain is Smoothelin (923 aa).

N-acetylalanine is present on Ala-2. The stretch at 24–89 (LAERRRIRSA…ARLAGRLESM (66 aa)) forms a coiled coil. Positions 134-456 (SRLPSSGPRE…GTGEPGGSMK (323 aa)) are disordered. Low complexity-rich tracts occupy residues 164–179 (QEQQ…TPED) and 192–205 (RAPP…PASP). Pro residues predominate over residues 237–252 (LPHPSEAPSPEPPMSP). 2 stretches are compositionally biased toward polar residues: residues 272-285 (PSDT…FSNT) and 293-314 (TKSC…NREP). Residues Ser-299, Ser-301, Ser-304, and Ser-340 each carry the phosphoserine modification. Thr-359 and Thr-372 each carry phosphothreonine. Residues 366–389 (PSLISTTPASSSSSNSSSPSPSDT) are compositionally biased toward low complexity. A phosphoserine mark is found at Ser-501, Ser-521, and Ser-574. Disordered regions lie at residues 542–578 (KMEP…PLSA) and 615–772 (QRKR…ARKA). The stretch at 601-628 (EERKLIRAALRELRQRKRDQRDKERERR) forms a coiled coil. Residues 615 to 638 (QRKRDQRDKERERRLREARARPGE) are compositionally biased toward basic and acidic residues. Ser-641 carries the phosphoserine modification. Positions 674 to 687 (NDGTQTARTTTVES) are enriched in polar residues. A compositionally biased stretch (low complexity) spans 697–721 (SSSSSTTTTTVQTKSFSSSSSSSSS). Phosphoserine is present on Ser-735. Positions 744–756 (LERRQAEKKKELM) are enriched in basic and acidic residues. Position 798 is a phosphoserine (Ser-798). The Calponin-homology (CH) domain occupies 805 to 912 (NSIKQMLLDW…YVQSLYNHLR (108 aa)).

This sequence belongs to the smoothelin family.

It localises to the cytoplasm. Its subcellular location is the cytoskeleton. Structural protein of the cytoskeleton. This Mus musculus (Mouse) protein is Smoothelin (Smtn).